The following is a 139-amino-acid chain: Lysozyme (139 aa).

The signal sequence occupies residues 1–19 (MTKYVILLAVLAFALHCDA). The C-type lysozyme domain maps to 20 to 139 (KRFTRCGLVQ…QHGLPDISDC (120 aa)). Intrachain disulfides connect cysteine 25–cysteine 139, cysteine 46–cysteine 129, cysteine 81–cysteine 95, and cysteine 91–cysteine 109. Catalysis depends on residues glutamate 51 and aspartate 69.

It belongs to the glycosyl hydrolase 22 family.

The enzyme catalyses Hydrolysis of (1-&gt;4)-beta-linkages between N-acetylmuramic acid and N-acetyl-D-glucosamine residues in a peptidoglycan and between N-acetyl-D-glucosamine residues in chitodextrins.. Functionally, lysozymes have primarily a bacteriolytic function; those in tissues and body fluids are associated with the monocyte-macrophage system and enhance the activity of immunoagents. The sequence is that of Lysozyme from Hyalophora cecropia (Cecropia moth).